We begin with the raw amino-acid sequence, 334 residues long: Transcription initiation factor IIB (334 aa).

The segment at 34–65 (EELVCPMCDSKNIIKDYEKAEIVCEDCGCVLQ) adopts a TFIIB-type zinc-finger fold. C38, C41, C57, and C60 together coordinate Zn(2+). Tandem repeats lie at residues 151-234 (SELD…SREL) and 245-326 (DYVP…ELTE).

Belongs to the TFIIB family.

Its function is as follows. Stabilizes TBP binding to an archaeal box-A promoter. Also responsible for recruiting RNA polymerase II to the pre-initiation complex (DNA-TBP-TFIIB). In Methanococcus aeolicus (strain ATCC BAA-1280 / DSM 17508 / OCM 812 / Nankai-3), this protein is Transcription initiation factor IIB.